Consider the following 589-residue polypeptide: Arylsulfatase L (589 aa).

Positions 1-31 (MLHLHHSCLCFRSWLPAMLAVLLSLAPSASS) are cleaved as a signal peptide. Residues aspartate 46 and aspartate 47 each coordinate Ca(2+). An N-linked (GlcNAc...) asparagine glycan is attached at asparagine 58. A Ca(2+)-binding site is contributed by cysteine 86. The Nucleophile role is filled by cysteine 86. A 3-oxoalanine (Cys) modification is found at cysteine 86. An N-linked (GlcNAc...) asparagine glycan is attached at asparagine 125. Lysine 145 contacts substrate. Histidine 147 is an active-site residue. N-linked (GlcNAc...) asparagine glycosylation is present at asparagine 258. A substrate-binding site is contributed by histidine 301. An N-linked (GlcNAc...) asparagine glycan is attached at asparagine 344. Ca(2+) is bound by residues aspartate 353 and histidine 354. Position 378 (lysine 378) interacts with substrate.

This sequence belongs to the sulfatase family. It depends on Ca(2+) as a cofactor. N-glycosylated. Post-translationally, the conversion to 3-oxoalanine (also known as C-formylglycine, FGly), of a serine or cysteine residue in prokaryotes and of a cysteine residue in eukaryotes, is critical for catalytic activity. In terms of tissue distribution, expressed in the pancreas, liver and kidney.

It localises to the golgi apparatus. Its subcellular location is the golgi stack. The enzyme catalyses an aryl sulfate + H2O = a phenol + sulfate + H(+). With respect to regulation, inhibited by millimolar concentrations of warfarin. Exhibits arylsulfatase activity towards the artificial substrate 4-methylumbelliferyl sulfate. May be essential for the correct composition of cartilage and bone matrix during development. Has no activity toward steroid sulfates. The sequence is that of Arylsulfatase L from Homo sapiens (Human).